We begin with the raw amino-acid sequence, 368 residues long: Probable endopolygalacturonase I (368 aa).

An N-terminal signal peptide occupies residues 1 to 18 (MRSVEILGLAALGSLVAA). The propeptide occupies 19–31 (APSPSRVSNSAKK). An intrachain disulfide couples C35 to C50. PbH1 repeat units lie at residues 162 to 192 (ATNL…DIGE) and 193 to 214 (SNGV…AINS). D207 (proton donor) is an active-site residue. The cysteines at positions 209 and 225 are disulfide-linked. The active site involves H229. PbH1 repeat units lie at residues 244–265 (VKNV…RIKT), 273–295 (VGDV…VIEQ), and 307–328 (TTGV…ASNA). N246 carries an N-linked (GlcNAc...) asparagine glycan. Disulfide bonds link C335-C340 and C359-C368.

This sequence belongs to the glycosyl hydrolase 28 family.

The protein resides in the secreted. The enzyme catalyses (1,4-alpha-D-galacturonosyl)n+m + H2O = (1,4-alpha-D-galacturonosyl)n + (1,4-alpha-D-galacturonosyl)m.. Its function is as follows. Involved in maceration and soft-rotting of plant tissue. Hydrolyzes the 1,4-alpha glycosidic bonds of de-esterified pectate in the smooth region of the plant cell wall. In Aspergillus clavatus (strain ATCC 1007 / CBS 513.65 / DSM 816 / NCTC 3887 / NRRL 1 / QM 1276 / 107), this protein is Probable endopolygalacturonase I (pgaI).